A 103-amino-acid chain; its full sequence is Histone H4 (103 aa).

Positions Met1–Gly14 are enriched in gly residues. The interval Met1–Arg20 is disordered. N-acetylserine is present on Ser2. Lys6 and Lys13 each carry N6-acetyl-N6-methyllysine; alternate. Residue Lys17 is modified to N6-acetyllysine. Residues Lys17–Lys21 mediate DNA binding. Lys21 bears the N6-methyllysine mark.

The protein belongs to the histone H4 family. As to quaternary structure, the nucleosome is a histone octamer containing two molecules each of H2A, H2B, H3 and H4 assembled in one H3-H4 heterotetramer and two H2A-H2B heterodimers. The octamer wraps approximately 147 bp of DNA.

It localises to the nucleus. Its subcellular location is the chromosome. In terms of biological role, core component of nucleosome. Nucleosomes wrap and compact DNA into chromatin, limiting DNA accessibility to the cellular machineries which require DNA as a template. Histones thereby play a central role in transcription regulation, DNA repair, DNA replication and chromosomal stability. DNA accessibility is regulated via a complex set of post-translational modifications of histones, also called histone code, and nucleosome remodeling. The sequence is that of Histone H4 from Ascaris suum (Pig roundworm).